A 250-amino-acid chain; its full sequence is MNITAIIPARFASTRFPGKALADIAGKPMVQHVYERTARARLVSEVVVATDDDRIAQAVRGFGGRVEMTSRDHETGTDRLAEVASRIGAEIIVNVQGDEPLIEPAMIDEAIAPLAENPAVRMGTLKSRIRTLHDFLSPNVVKVVTDLEGYALYFSRSPLPFFRDKWNDLKDESFASGRLLCYKHVGLYVYRRDFLMEFAKMPPTALELAEKLEQLRALENGCRIRVVETAHESIGVDTPNDLEKVLEKLK.

Belongs to the KdsB family.

It localises to the cytoplasm. The enzyme catalyses 3-deoxy-alpha-D-manno-oct-2-ulosonate + CTP = CMP-3-deoxy-beta-D-manno-octulosonate + diphosphate. The protein operates within nucleotide-sugar biosynthesis; CMP-3-deoxy-D-manno-octulosonate biosynthesis; CMP-3-deoxy-D-manno-octulosonate from 3-deoxy-D-manno-octulosonate and CTP: step 1/1. It participates in bacterial outer membrane biogenesis; lipopolysaccharide biosynthesis. Its function is as follows. Activates KDO (a required 8-carbon sugar) for incorporation into bacterial lipopolysaccharide in Gram-negative bacteria. This is 3-deoxy-manno-octulosonate cytidylyltransferase from Geobacter sulfurreducens (strain ATCC 51573 / DSM 12127 / PCA).